The following is an 85-amino-acid chain: uncharacterized protein (85 aa).

The protein belongs to the YciI family.

This is an uncharacterized protein from Bacillus subtilis (strain 168).